Consider the following 518-residue polypeptide: Probable cyclic di-GMP phosphodiesterase PdeN (518 aa).

2 helical membrane-spanning segments follow: residues 16 to 36 (CIVAGVMIAILVSCLQFLVAW) and 236 to 256 (VWYAFLLGGMSGTVVGLLCYY). The EAL domain maps to 261-514 (RMRPGREIMT…DFVRWLKKPY (254 aa)).

It is found in the cell inner membrane. It carries out the reaction 3',3'-c-di-GMP + H2O = 5'-phosphoguanylyl(3'-&gt;5')guanosine + H(+). Functionally, phosphodiesterase (PDE) that catalyzes the hydrolysis of cyclic-di-GMP (c-di-GMP) to 5'-pGpG. The chain is Probable cyclic di-GMP phosphodiesterase PdeN from Escherichia coli (strain K12).